The sequence spans 737 residues: Pentatricopeptide repeat-containing protein At3g49740 (737 aa).

PPR repeat units follow at residues 20 to 55 (TLLN…TLRP), 56 to 90 (DQYS…GLLC), 91 to 121 (HSHV…IDEP), 122 to 152 (DVYS…MPER), 154 to 188 (DVAI…GVRH), 189 to 222 (DKFG…GFFI), 223 to 253 (ASSV…TDVA), 256 to 289 (DQVT…SLRP), 290 to 321 (TDLT…GYEK), 322 to 352 (YTLV…LEEK), 353 to 387 (DLVT…GVKP), 388 to 418 (DEFT…FGLS), 420 to 454 (KIEI…NLIS), 455 to 485 (WNAI…EVRI), 488 to 522 (DAYT…GQFK), 523 to 553 (ETLI…MSEK), 554 to 588 (DVVS…GKVI), 590 to 620 (DAAT…MVEF), and 626 to 656 (NVDH…SEKT). The segment at 663-737 (VWWALFSACA…KQRGCSWMRL (75 aa)) is type E motif; degenerate.

It belongs to the PPR family. PCMP-E subfamily.

The polypeptide is Pentatricopeptide repeat-containing protein At3g49740 (PCMP-E84) (Arabidopsis thaliana (Mouse-ear cress)).